Here is a 465-residue protein sequence, read N- to C-terminus: Tapasin (465 aa).

Residues 1–23 form the signal peptide; that stretch reads MKPLLLLVAVALGLATVVSVVSA. Over 24-416 the chain is Lumenal; the sequence is GPEAIECWFV…GFSGPSIEDG (393 aa). Residues C30 and C94 are joined by a disulfide bond. N256 carries N-linked (GlcNAc...) asparagine glycosylation. The Ig-like C1-type domain maps to 295 to 402; that stretch reads PRVSLTPAPV…PASGRSADVT (108 aa). A disulfide bond links C318 and C385. The helical transmembrane segment at 417–437 threads the bilayer; sequence IGLFLSAFLLLGLLKVLGWLA. Residues 438-465 are Cytoplasmic-facing; it reads AYWTIPEVSKEKATAASLTIPRNSKKSQ.

In terms of assembly, heterodimer with PDIA3; disulfide-linked. Obligatory mediator for the interaction between newly assembled MHC class I molecules, calreticulin, PDIA3 and TAP. Up to 4 MHC class I/tapasin complexes bind to 1 TAP. Interacts with HLA-G-B2M complex; this interaction is required for loading of high affinity peptides. On its own or as part of MHC class I peptide loading complex, interacts with ligand-free MR1 or MR1-B2M complex, providing for stable MR1 pools ready for metabolite antigen processing.

It is found in the endoplasmic reticulum membrane. In terms of biological role, involved in the association of MHC class I with transporter associated with antigen processing (TAP) and in the assembly of MHC class I with peptide (peptide loading). The sequence is that of Tapasin (Tapbp) from Mus musculus (Mouse).